A 510-amino-acid chain; its full sequence is Maturase K (510 aa).

It belongs to the intron maturase 2 family. MatK subfamily.

The protein resides in the plastid. It localises to the chloroplast. Its function is as follows. Usually encoded in the trnK tRNA gene intron. Probably assists in splicing its own and other chloroplast group II introns. This Thuja plicata (Western red-cedar) protein is Maturase K.